The primary structure comprises 309 residues: HPr kinase/phosphorylase (309 aa).

Residues His138 and Lys159 contribute to the active site. 153 to 160 (GQSGVGKS) serves as a coordination point for ATP. Position 160 (Ser160) interacts with Mg(2+). Asp177 serves as the catalytic Proton acceptor; for phosphorylation activity. Proton donor; for dephosphorylation activity. The interval 201-210 (LEIRGLGIIN) is important for the catalytic mechanism of both phosphorylation and dephosphorylation. Glu202 serves as a coordination point for Mg(2+). Arg243 is an active-site residue. Positions 264–269 (PVRPGR) are important for the catalytic mechanism of dephosphorylation.

The protein belongs to the HPrK/P family. In terms of assembly, homohexamer. Mg(2+) serves as cofactor.

It catalyses the reaction [HPr protein]-L-serine + ATP = [HPr protein]-O-phospho-L-serine + ADP + H(+). The catalysed reaction is [HPr protein]-O-phospho-L-serine + phosphate + H(+) = [HPr protein]-L-serine + diphosphate. Its function is as follows. Catalyzes the ATP- as well as the pyrophosphate-dependent phosphorylation of a specific serine residue in HPr, a phosphocarrier protein of the phosphoenolpyruvate-dependent sugar phosphotransferase system (PTS). HprK/P also catalyzes the pyrophosphate-producing, inorganic phosphate-dependent dephosphorylation (phosphorolysis) of seryl-phosphorylated HPr (P-Ser-HPr). The two antagonistic activities of HprK/P are regulated by several intracellular metabolites, which change their concentration in response to the absence or presence of rapidly metabolisable carbon sources (glucose, fructose, etc.) in the growth medium. Also phosphorylates/dephosphorylates the HPr-like catabolite repression protein crh on a specific serine residue. Therefore, by controlling the phosphorylation state of HPr and crh, HPrK/P is a sensor enzyme that plays a major role in the regulation of carbon metabolism and sugar transport: it mediates carbon catabolite repression (CCR), and regulates PTS-catalyzed carbohydrate uptake and inducer exclusion. In Bacillus cytotoxicus (strain DSM 22905 / CIP 110041 / 391-98 / NVH 391-98), this protein is HPr kinase/phosphorylase.